The following is a 400-amino-acid chain: Molybdenum-containing formylmethanofuran dehydrogenase 1 subunit C (400 aa).

7 tandem repeats follow at residues 76–88, 95–107, 114–126, 140–152, 159–171, 178–190, and 197–209. The 7 X 13 AA repeats of [GW]-X-X-M-X-X-G-X-I-X-[IV]-X-G stretch occupies residues 76-209; the sequence is GSGMKSGKII…MVSGIIKIHG (134 aa).

In the N-terminal section; belongs to the FwdC/FmdC family. The protein in the C-terminal section; belongs to the molybdenum dinucleotide binding protein family. Consists of five subunits; FmdA, FmdB, FmdC, FmdD, and FmdE.

It carries out the reaction N-formylmethanofuran + 2 oxidized [2Fe-2S]-[ferredoxin] + H2O = methanofuran + 2 reduced [2Fe-2S]-[ferredoxin] + CO2 + H(+). The protein operates within one-carbon metabolism; methanogenesis from CO(2); 5,10-methenyl-5,6,7,8-tetrahydromethanopterin from CO(2): step 1/3. Its activity is regulated as follows. Inactivated by cyanide. Catalyzes the reversible oxidation of CO(2) and methanofuran (MFR) to N-formylmethanofuran (CHO-MFR). Can only oxidize formylmethanofuran. This enzyme is oxygen-labile. This chain is Molybdenum-containing formylmethanofuran dehydrogenase 1 subunit C (fmdC), found in Methanothermobacter marburgensis (strain ATCC BAA-927 / DSM 2133 / JCM 14651 / NBRC 100331 / OCM 82 / Marburg) (Methanobacterium thermoautotrophicum).